Reading from the N-terminus, the 298-residue chain is Glycine--tRNA ligase alpha subunit (298 aa).

Belongs to the class-II aminoacyl-tRNA synthetase family. In terms of assembly, tetramer of two alpha and two beta subunits.

The protein localises to the cytoplasm. The enzyme catalyses tRNA(Gly) + glycine + ATP = glycyl-tRNA(Gly) + AMP + diphosphate. This Helicobacter pylori (strain P12) protein is Glycine--tRNA ligase alpha subunit.